A 378-amino-acid chain; its full sequence is Pulmonary surfactant-associated protein D (378 aa).

The first 20 residues, 1–20, serve as a signal peptide directing secretion; the sequence is MLLLPLSVLILLTQPPRSLG. An S-nitrosocysteine mark is found at Cys-35 and Cys-40. A disordered region spans residues 43-221; that stretch reads MENGLPGRDG…ERGAKGESGL (179 aa). The Collagen-like domain maps to 46–222; it reads GLPGRDGRDG…RGAKGESGLP (177 aa). Positions 50-65 are enriched in basic and acidic residues; sequence RDGRDGREGPRGEKGD. A 4-hydroxyproline modification is found at Pro-78. 5-hydroxylysine is present on Lys-87. Residue Asn-90 is glycosylated (N-linked (GlcNAc...) asparagine). Pro-96 carries the 4-hydroxyproline modification. A 5-hydroxylysine modification is found at Lys-99. Residues 105–114 show a composition bias toward pro residues; it reads CGPPGPPGIP. Over residues 137 to 146 the composition is skewed to low complexity; the sequence is PKGETGPKGE. 2 positions are modified to 4-hydroxyproline: Pro-171 and Pro-177. Positions 173-197 are enriched in low complexity; that stretch reads ERGAPGSAGAAGPAGATGPQGPSGA. Residues 204–216 show a composition bias toward basic and acidic residues; it reads KGDRGPPGERGAK. Residues 223-254 adopt a coiled-coil conformation; that stretch reads GITALRQQVETLQGQVQRLQKAFSQYKKVELF. Residues 260-378 form the C-type lectin domain; it reads VGEKIFKTGG…GELRLVICEF (119 aa). Intrachain disulfides connect Cys-281–Cys-376 and Cys-354–Cys-368. Residue Asn-323 is glycosylated (N-linked (GlcNAc...) asparagine).

Belongs to the SFTPD family. As to quaternary structure, oligomeric complex of 4 set of homotrimers. Post-translationally, hydroxylation on proline residues within the sequence motif, GXPG, is most likely to be 4-hydroxy as this fits the requirement for 4-hydroxylation in vertebrates. In terms of processing, S-nitrosylation at Cys-35 and Cys-40 alters the quaternary structure which results in a pro-inflammatory chemoattractive signaling activity with macrophages.

It localises to the secreted. The protein localises to the extracellular space. The protein resides in the extracellular matrix. Its subcellular location is the surface film. Functionally, contributes to the lung's defense against inhaled microorganisms, organic antigens and toxins. Interacts with compounds such as bacterial lipopolysaccharides, oligosaccharides and fatty acids and modulates leukocyte action in immune response. May participate in the extracellular reorganization or turnover of pulmonary surfactant. Binds strongly maltose residues and to a lesser extent other alpha-glucosyl moieties. The polypeptide is Pulmonary surfactant-associated protein D (SFTPD) (Sus scrofa (Pig)).